We begin with the raw amino-acid sequence, 196 residues long: MKVYKAQLIKTVYKIEDLPPPDKKEIAFAGRSNVGKSSFLNAILGIKIAKVSSTPGKTRSINYYLVNDKYYFVDLPGYGFASVSKQEKERWNVLMNEYFKTRFSLSAVSLLIDHRHMPQKLDYAMVEWLKDLGTPFLFILTKSDKLTKSEKAKLFEDIKRSFSTYGEYIYMPFSSKTKEGLKEVLKTIGEILGDND.

The EngB-type G domain maps to 22–194 (DKKEIAFAGR…LKTIGEILGD (173 aa)). GTP is bound by residues 30–37 (GRSNVGKS), 56–60 (GKTRS), 74–77 (DLPG), 141–144 (TKSD), and 173–175 (FSS). Positions 37 and 58 each coordinate Mg(2+).

It belongs to the TRAFAC class TrmE-Era-EngA-EngB-Septin-like GTPase superfamily. EngB GTPase family. Requires Mg(2+) as cofactor.

Necessary for normal cell division and for the maintenance of normal septation. In Petrotoga mobilis (strain DSM 10674 / SJ95), this protein is Probable GTP-binding protein EngB.